Consider the following 459-residue polypeptide: Argininosuccinate lyase (459 aa).

This sequence belongs to the lyase 1 family. Argininosuccinate lyase subfamily.

It localises to the cytoplasm. It catalyses the reaction 2-(N(omega)-L-arginino)succinate = fumarate + L-arginine. It participates in amino-acid biosynthesis; L-arginine biosynthesis; L-arginine from L-ornithine and carbamoyl phosphate: step 3/3. This is Argininosuccinate lyase from Sulfurihydrogenibium sp. (strain YO3AOP1).